We begin with the raw amino-acid sequence, 359 residues long: S-geranylgeranyl-glutathione receptor P2RY8 (359 aa).

Residues 1–19 are Extracellular-facing; the sequence is MQVPNSTGPDNATLQMLRN. N-linked (GlcNAc...) asparagine glycans are attached at residues Asn5 and Asn11. Residues 20–40 traverse the membrane as a helical segment; it reads PAIAVALPVVYSLVAAVSIPG. Topologically, residues 41–57 are cytoplasmic; it reads NLFSLWVLCRRMGPRSP. The helical transmembrane segment at 58–78 threads the bilayer; that stretch reads SVIFMINLSVTDLMLASVLPF. Over 79 to 88 the chain is Extracellular; it reads QIYYHCNRHH. The chain crosses the membrane as a helical span at residues 89–109; the sequence is WVFGVLLCNVVTVAFYANMYS. The Cytoplasmic segment spans residues 110–138; sequence SILTMTCISVERFLGVLYPLSSKRWRRRR. A helical transmembrane segment spans residues 139–159; the sequence is YAVAACAGTWLLLLTALSPLA. Topologically, residues 160–187 are extracellular; sequence RTDLTYPVHALGIITCFDVLKWTMLPSV. The chain crosses the membrane as a helical span at residues 188 to 208; it reads AMWAVFLFTIFILLFLIPFVI. At 209–237 the chain is on the cytoplasmic side; sequence TVACYTATILKLLRTEEAHGREQRRRAVG. A helical membrane pass occupies residues 238–258; the sequence is LAAVVLLAFVTCFAPNNFVLL. Residues 259–275 are Extracellular-facing; sequence AHIVSRLFYGKSYYHVY. A helical membrane pass occupies residues 276–296; that stretch reads KLTLCLSCLNNCLDPFVYYFA. The Cytoplasmic segment spans residues 297–359; sequence SREFQLRLRE…PGLQRQESVF (63 aa). The disordered stretch occupies residues 329–359; sequence RTTSVRSEAGAHPEGMEGATRPGLQRQESVF.

It belongs to the G-protein coupled receptor 1 family. In terms of tissue distribution, barely detectable in normal blood leukocytes. Weaker expression was seen in heart, kidney and lung. Not detected in brain. Expressed in B cells and follicular helper T cells in germinal centers (at protein level).

The protein localises to the cell membrane. In terms of biological role, g protein-coupled receptor for S-geranylgeranyl-glutathione (GGG), an endogenous metabolite present in lymphoid tissues. Couples the binding of GGG to the activation of GNA13 and downstream repression of AKT activation in lymphocytes defining their positioning and growth within lymphoid organs. In lymphoid follicles, confines B cells and follicular helper T cells in germinal centers (GCs) in response to GGG local gradients established by GGT5 (via GGG catabolism) and ABCC1 (via extracellular transport) with lower concentrations of GGG found in the follicular dendritic cell network region around which germinal centers are formed. In the bone marrow, also in response to GGG gradients established by GGT5 and ABCC1, it restricts chemotactic transmigration of B cells, T cells and NK cells from blood vessels to the bone marrow parenchyma. Contributes to GNA13-dependent pathway that suppresses GC B cell growth. The chain is S-geranylgeranyl-glutathione receptor P2RY8 from Homo sapiens (Human).